The sequence spans 92 residues: Small ribosomal subunit protein uS17 (92 aa).

This sequence belongs to the universal ribosomal protein uS17 family. As to quaternary structure, part of the 30S ribosomal subunit.

Its function is as follows. One of the primary rRNA binding proteins, it binds specifically to the 5'-end of 16S ribosomal RNA. The chain is Small ribosomal subunit protein uS17 from Cupriavidus necator (strain ATCC 17699 / DSM 428 / KCTC 22496 / NCIMB 10442 / H16 / Stanier 337) (Ralstonia eutropha).